Consider the following 28-residue polypeptide: Potassium channel toxin alpha-KTx 9.3 (28 aa).

Disulfide bonds link C3–C19, C6–C24, and C10–C26.

Belongs to the short scorpion toxin superfamily. Potassium channel inhibitor family. Alpha-KTx 09 subfamily. Expressed by the venom gland.

The protein resides in the secreted. Its function is as follows. Inhibits voltage-gated potassium channels. The chain is Potassium channel toxin alpha-KTx 9.3 from Aegaeobuthus nigrocinctus (Scorpion).